We begin with the raw amino-acid sequence, 140 residues long: Putative nickel-responsive regulator 2 (140 aa).

Ni(2+) is bound by residues His81, His92, His94, and Cys100.

Belongs to the transcriptional regulatory CopG/NikR family. It depends on Ni(2+) as a cofactor.

Functionally, transcriptional regulator. In Methanosarcina acetivorans (strain ATCC 35395 / DSM 2834 / JCM 12185 / C2A), this protein is Putative nickel-responsive regulator 2.